The chain runs to 290 residues: Pantothenate synthetase (290 aa).

An ATP-binding site is contributed by 34–41 (MGNLHDGH). Histidine 41 serves as the catalytic Proton donor. Residue glutamine 65 participates in (R)-pantoate binding. Glutamine 65 contacts beta-alanine. 156-159 (GKKD) serves as a coordination point for ATP. Glutamine 162 lines the (R)-pantoate pocket. Residues alanine 185 and 193-196 (LSSR) each bind ATP.

The protein belongs to the pantothenate synthetase family. As to quaternary structure, homodimer.

The protein localises to the cytoplasm. The catalysed reaction is (R)-pantoate + beta-alanine + ATP = (R)-pantothenate + AMP + diphosphate + H(+). It functions in the pathway cofactor biosynthesis; (R)-pantothenate biosynthesis; (R)-pantothenate from (R)-pantoate and beta-alanine: step 1/1. Catalyzes the condensation of pantoate with beta-alanine in an ATP-dependent reaction via a pantoyl-adenylate intermediate. The chain is Pantothenate synthetase from Acidovorax ebreus (strain TPSY) (Diaphorobacter sp. (strain TPSY)).